A 482-amino-acid polypeptide reads, in one-letter code: Scarecrow-like protein 3 (482 aa).

The 435-residue stretch at 45–479 (LKPEERGLYL…RPLYSVSAWR (435 aa)) folds into the GRAS domain. Residues 52–115 (LYLIHLLLTC…ILKSWPGLYK (64 aa)) are leucine repeat I (LRI). The tract at residues 134 to 199 (RRLFFEMFPI…EGPPHLRITG (66 aa)) is VHIID. The short motif at 165–169 (VHVID) is the VHIID element. The segment at 209-241 (QMAHRLIEEAEKLDIPFQFNPVVSRLDCLNVEQ) is leucine repeat II (LRII). The segment at 250 to 401 (LAVSSVLQLH…KMLFGEEIKN (152 aa)) is PFYRE. The tract at residues 302–324 (ENDMSNNNGYSPSGDSASSLPLP) is disordered. A compositionally biased stretch (polar residues) spans 305 to 324 (MSNNNGYSPSGDSASSLPLP). The segment at 404-479 (SCEGFERRER…RPLYSVSAWR (76 aa)) is SAW.

Belongs to the GRAS family. In terms of assembly, binds to zinc finger proteins MGP/IDD3, IDD4, IDD5, BIB/IDD9 and JKD/IDD10. As to expression, expressed in seedlings, root epidermis, leaves, flowers and siliques.

The protein resides in the nucleus. Its function is as follows. Probable transcription factor involved in plant development. This is Scarecrow-like protein 3 from Arabidopsis thaliana (Mouse-ear cress).